A 298-amino-acid polypeptide reads, in one-letter code: Glycine--tRNA ligase alpha subunit (298 aa).

The protein belongs to the class-II aminoacyl-tRNA synthetase family. In terms of assembly, tetramer of two alpha and two beta subunits.

Its subcellular location is the cytoplasm. It carries out the reaction tRNA(Gly) + glycine + ATP = glycyl-tRNA(Gly) + AMP + diphosphate. This is Glycine--tRNA ligase alpha subunit (glyQ) from Helicobacter pylori (strain J99 / ATCC 700824) (Campylobacter pylori J99).